A 748-amino-acid polypeptide reads, in one-letter code: Cysteine--tRNA ligase, cytoplasmic (748 aa).

The disordered stretch occupies residues 1–25; it reads MAAAPAEQGKGKRVQPPWSPPEGTK. Residue cysteine 55 coordinates Zn(2+). Residue glycine 56 coordinates L-cysteine. A 'HIGH' region motif is present at residues 57–67; sequence PTVYDASHMGH. Residue threonine 96 coordinates L-cysteine. The 'KIIK' region motif lies at 101 to 104; it reads KIIK. Positions 348, 373, and 377 each coordinate Zn(2+). Position 373 (histidine 373) interacts with L-cysteine. The short motif at 406 to 410 is the 'KMSKS' region element; that stretch reads KMSKS. Residue lysine 409 coordinates ATP. Basic and acidic residues-rich tracts occupy residues 656–679 and 686–717; these read KIEE…EAAK and PPHE…KELS. Positions 656-719 are disordered; the sequence is KIEEEKKRKK…DTEGKELSKG (64 aa).

Belongs to the class-I aminoacyl-tRNA synthetase family. As to quaternary structure, homodimer. Requires Zn(2+) as cofactor.

The protein resides in the cytoplasm. It carries out the reaction tRNA(Cys) + L-cysteine + ATP = L-cysteinyl-tRNA(Cys) + AMP + diphosphate. Functionally, catalyzes the ATP-dependent ligation of cysteine to tRNA(Cys). This chain is Cysteine--tRNA ligase, cytoplasmic (CARS1), found in Gallus gallus (Chicken).